A 494-amino-acid chain; its full sequence is Protein nucleotidyltransferase YdiU (494 aa).

Residues Gly101, Gly103, Arg104, Lys123, Asp135, Gly136, Arg186, and Arg193 each coordinate ATP. Residue Asp262 is the Proton acceptor of the active site. Positions 263 and 272 each coordinate Mg(2+). Asp272 contributes to the ATP binding site.

The protein belongs to the SELO family. Mg(2+) serves as cofactor. Mn(2+) is required as a cofactor.

It carries out the reaction L-seryl-[protein] + ATP = 3-O-(5'-adenylyl)-L-seryl-[protein] + diphosphate. The catalysed reaction is L-threonyl-[protein] + ATP = 3-O-(5'-adenylyl)-L-threonyl-[protein] + diphosphate. The enzyme catalyses L-tyrosyl-[protein] + ATP = O-(5'-adenylyl)-L-tyrosyl-[protein] + diphosphate. It catalyses the reaction L-histidyl-[protein] + UTP = N(tele)-(5'-uridylyl)-L-histidyl-[protein] + diphosphate. It carries out the reaction L-seryl-[protein] + UTP = O-(5'-uridylyl)-L-seryl-[protein] + diphosphate. The catalysed reaction is L-tyrosyl-[protein] + UTP = O-(5'-uridylyl)-L-tyrosyl-[protein] + diphosphate. Nucleotidyltransferase involved in the post-translational modification of proteins. It can catalyze the addition of adenosine monophosphate (AMP) or uridine monophosphate (UMP) to a protein, resulting in modifications known as AMPylation and UMPylation. In Chromohalobacter salexigens (strain ATCC BAA-138 / DSM 3043 / CIP 106854 / NCIMB 13768 / 1H11), this protein is Protein nucleotidyltransferase YdiU.